The following is a 915-amino-acid chain: Translation initiation factor IF-2 (915 aa).

Residues glutamine 83 to leucine 94 show a composition bias toward basic and acidic residues. 3 disordered regions span residues glutamine 83–proline 177, glutamate 216–valine 280, and isoleucine 293–glutamate 328. Composition is skewed to low complexity over residues valine 111–serine 129 and alanine 137–proline 164. The segment covering leucine 165–proline 177 has biased composition (pro residues). Polar residues predominate over residues isoleucine 293–arginine 305. Basic and acidic residues predominate over residues methionine 314–glutamate 328. Positions threonine 412–lysine 582 constitute a tr-type G domain. Residues glycine 421–threonine 428 are G1. Glycine 421 to threonine 428 lines the GTP pocket. The tract at residues glycine 446–histidine 450 is G2. The interval aspartate 468–glycine 471 is G3. Residues aspartate 468–histidine 472 and asparagine 522–aspartate 525 each bind GTP. Positions asparagine 522–aspartate 525 are G4. The G5 stretch occupies residues serine 558–lysine 560.

It belongs to the TRAFAC class translation factor GTPase superfamily. Classic translation factor GTPase family. IF-2 subfamily.

The protein localises to the cytoplasm. Functionally, one of the essential components for the initiation of protein synthesis. Protects formylmethionyl-tRNA from spontaneous hydrolysis and promotes its binding to the 30S ribosomal subunits. Also involved in the hydrolysis of GTP during the formation of the 70S ribosomal complex. In Chlorobium luteolum (strain DSM 273 / BCRC 81028 / 2530) (Pelodictyon luteolum), this protein is Translation initiation factor IF-2.